The primary structure comprises 308 residues: Ornithine carbamoyltransferase (308 aa).

Carbamoyl phosphate is bound by residues 56–59, Gln-83, Arg-107, and 134–137; these read STRT and HPCQ. L-ornithine contacts are provided by residues Asn-165, Asp-225, and 229–230; that span reads SM. Carbamoyl phosphate-binding positions include 266 to 267 and Arg-294; that span reads CL.

The protein belongs to the aspartate/ornithine carbamoyltransferase superfamily. OTCase family.

It localises to the cytoplasm. The catalysed reaction is carbamoyl phosphate + L-ornithine = L-citrulline + phosphate + H(+). It functions in the pathway amino-acid biosynthesis; L-arginine biosynthesis; L-arginine from L-ornithine and carbamoyl phosphate: step 1/3. In terms of biological role, reversibly catalyzes the transfer of the carbamoyl group from carbamoyl phosphate (CP) to the N(epsilon) atom of ornithine (ORN) to produce L-citrulline. This chain is Ornithine carbamoyltransferase, found in Paracoccus denitrificans (strain Pd 1222).